Consider the following 357-residue polypeptide: 4-hydroxy-3-methylbut-2-en-1-yl diphosphate synthase (flavodoxin) (357 aa).

The [4Fe-4S] cluster site is built by C264, C267, C299, and E306.

The protein belongs to the IspG family. It depends on [4Fe-4S] cluster as a cofactor.

It carries out the reaction (2E)-4-hydroxy-3-methylbut-2-enyl diphosphate + oxidized [flavodoxin] + H2O + 2 H(+) = 2-C-methyl-D-erythritol 2,4-cyclic diphosphate + reduced [flavodoxin]. Its pathway is isoprenoid biosynthesis; isopentenyl diphosphate biosynthesis via DXP pathway; isopentenyl diphosphate from 1-deoxy-D-xylulose 5-phosphate: step 5/6. Its function is as follows. Converts 2C-methyl-D-erythritol 2,4-cyclodiphosphate (ME-2,4cPP) into 1-hydroxy-2-methyl-2-(E)-butenyl 4-diphosphate. In Campylobacter jejuni subsp. jejuni serotype O:23/36 (strain 81-176), this protein is 4-hydroxy-3-methylbut-2-en-1-yl diphosphate synthase (flavodoxin).